Reading from the N-terminus, the 262-residue chain is MKGSEKITVVACYDYSMAALCDGADMLLVGDSAGMVVLGYDSTTRVTMDEMCLFTGAVSRGRKDSMVVGDLPFMSYQACTADAIRNSGRLVRAGADAVKLEGGAAVADAVRGVTGAGIPVMGHIGLLPQTAALSGGYRVQGRTRESALRLAEDAKALEEAGAFAIVLEMVAEEAARMVTKSVGVPTIGIGSGAGCDGQVLVLHDMLGLYGRFRPKFAKVYADLSGEVAGAVAGFKAEVESSQFPRPENSFYMDAGEADGLDR.

Mg(2+) is bound by residues Asp31 and Asp70. Residues 31–32 (DS), Asp70, and Lys99 each bind 3-methyl-2-oxobutanoate. Glu101 is a binding site for Mg(2+). Glu168 acts as the Proton acceptor in catalysis.

It belongs to the PanB family. In terms of assembly, homodecamer; pentamer of dimers. Mg(2+) is required as a cofactor.

The protein resides in the cytoplasm. The catalysed reaction is 3-methyl-2-oxobutanoate + (6R)-5,10-methylene-5,6,7,8-tetrahydrofolate + H2O = 2-dehydropantoate + (6S)-5,6,7,8-tetrahydrofolate. Its pathway is cofactor biosynthesis; coenzyme A biosynthesis. Catalyzes the reversible reaction in which hydroxymethyl group from 5,10-methylenetetrahydrofolate is transferred onto alpha-ketoisovalerate to form ketopantoate. The protein is 3-methyl-2-oxobutanoate hydroxymethyltransferase of Cenarchaeum symbiosum (strain A).